Consider the following 376-residue polypeptide: N-acetyldiaminopimelate deacetylase (376 aa).

Residue D69 is part of the active site. E128 acts as the Proton acceptor in catalysis.

This sequence belongs to the peptidase M20A family. N-acetyldiaminopimelate deacetylase subfamily.

It catalyses the reaction N-acetyl-(2S,6S)-2,6-diaminopimelate + H2O = (2S,6S)-2,6-diaminopimelate + acetate. Its pathway is amino-acid biosynthesis; L-lysine biosynthesis via DAP pathway; LL-2,6-diaminopimelate from (S)-tetrahydrodipicolinate (acetylase route): step 3/3. Catalyzes the conversion of N-acetyl-diaminopimelate to diaminopimelate and acetate. This chain is N-acetyldiaminopimelate deacetylase, found in Bacillus anthracis (strain A0248).